The chain runs to 145 residues: Transcription antitermination protein NusB (145 aa).

It belongs to the NusB family.

In terms of biological role, involved in transcription antitermination. Required for transcription of ribosomal RNA (rRNA) genes. Binds specifically to the boxA antiterminator sequence of the ribosomal RNA (rrn) operons. The polypeptide is Transcription antitermination protein NusB (Acidothermus cellulolyticus (strain ATCC 43068 / DSM 8971 / 11B)).